The sequence spans 546 residues: Chromosomal replication initiator protein DnaA (546 aa).

Residues 1–85 (MSDPQAALRA…TRALSQHMGR (85 aa)) are domain I, interacts with DnaA modulators. Positions 85 to 204 (RPCSLAVTIA…EPAHNPNREK (120 aa)) are domain II. Positions 96–111 (PPQPAPQEEPPAPAPQ) are enriched in pro residues. The tract at residues 96 to 209 (PPQPAPQEEP…PNREKSLNPK (114 aa)) is disordered. The segment covering 126–145 (QTQAFQQPTQSTQPAPASQP) has biased composition (low complexity). Basic and acidic residues predominate over residues 191–209 (IPREEPAHNPNREKSLNPK). Residues 205-421 (SLNPKHTFEN…GALIRVSAYS (217 aa)) form a domain III, AAA+ region region. Gly249, Gly251, Lys252, and Thr253 together coordinate ATP. Positions 422–546 (SLVNEPISLE…TQRVKNHNQR (125 aa)) are domain IV, binds dsDNA.

The protein belongs to the DnaA family. Oligomerizes as a right-handed, spiral filament on DNA at oriC.

The protein resides in the cytoplasm. Its function is as follows. Plays an essential role in the initiation and regulation of chromosomal replication. ATP-DnaA binds to the origin of replication (oriC) to initiate formation of the DNA replication initiation complex once per cell cycle. Binds the DnaA box (a 9 base pair repeat at the origin) and separates the double-stranded (ds)DNA. Forms a right-handed helical filament on oriC DNA; dsDNA binds to the exterior of the filament while single-stranded (ss)DNA is stabiized in the filament's interior. The ATP-DnaA-oriC complex binds and stabilizes one strand of the AT-rich DNA unwinding element (DUE), permitting loading of DNA polymerase. After initiation quickly degrades to an ADP-DnaA complex that is not apt for DNA replication. Binds acidic phospholipids. This is Chromosomal replication initiator protein DnaA from Corynebacterium aurimucosum (strain ATCC 700975 / DSM 44827 / CIP 107346 / CN-1) (Corynebacterium nigricans).